Reading from the N-terminus, the 358-residue chain is Dual-specificity RNA methyltransferase RlmN (358 aa).

Glu-91 functions as the Proton acceptor in the catalytic mechanism. Positions 98 to 335 (SQGRITQCLS…AIIRKSKGAD (238 aa)) constitute a Radical SAM core domain. Cys-105 and Cys-340 are oxidised to a cystine. [4Fe-4S] cluster contacts are provided by Cys-112, Cys-116, and Cys-119. Residues 164–165 (GE), Ser-196, 219–221 (SLH), and Asn-295 contribute to the S-adenosyl-L-methionine site. The active-site S-methylcysteine intermediate is the Cys-340.

Belongs to the radical SAM superfamily. RlmN family. [4Fe-4S] cluster serves as cofactor.

The protein resides in the cytoplasm. The enzyme catalyses adenosine(2503) in 23S rRNA + 2 reduced [2Fe-2S]-[ferredoxin] + 2 S-adenosyl-L-methionine = 2-methyladenosine(2503) in 23S rRNA + 5'-deoxyadenosine + L-methionine + 2 oxidized [2Fe-2S]-[ferredoxin] + S-adenosyl-L-homocysteine. The catalysed reaction is adenosine(37) in tRNA + 2 reduced [2Fe-2S]-[ferredoxin] + 2 S-adenosyl-L-methionine = 2-methyladenosine(37) in tRNA + 5'-deoxyadenosine + L-methionine + 2 oxidized [2Fe-2S]-[ferredoxin] + S-adenosyl-L-homocysteine. In terms of biological role, specifically methylates position 2 of adenine 2503 in 23S rRNA and position 2 of adenine 37 in tRNAs. m2A2503 modification seems to play a crucial role in the proofreading step occurring at the peptidyl transferase center and thus would serve to optimize ribosomal fidelity. The chain is Dual-specificity RNA methyltransferase RlmN from Oleidesulfovibrio alaskensis (strain ATCC BAA-1058 / DSM 17464 / G20) (Desulfovibrio alaskensis).